Reading from the N-terminus, the 636-residue chain is LDL receptor repeat-containing protein egg-1 (636 aa).

Residues 1 to 130 (MSSIAQKNRN…NHSNLFQCPS (130 aa)) lie on the Cytoplasmic side of the membrane. The chain crosses the membrane as a helical; Signal-anchor for type II membrane protein span at residues 131-151 (VAIVLVLALVILGVLAAIPLT). Over 152–636 (LMLTSSAQKM…VLKNSGRFPY (485 aa)) the chain is Extracellular. Asn-202 carries N-linked (GlcNAc...) asparagine glycosylation. LDL-receptor class A domains follow at residues 205–243 (TCSG…ENCK), 244–296 (ECQS…AMCK), 298–335 (TCSK…NNCN), 336–375 (KCQK…QQCD), 378–415 (TCSG…ENCP), 457–499 (KCHP…KNCT), 503–541 (ECGI…QNCS), and 542–579 (QCAS…LKCS). 22 disulfides stabilise this stretch: Cys-213-Cys-233, Cys-227-Cys-242, Cys-245-Cys-273, Cys-251-Cys-286, Cys-280-Cys-295, Cys-299-Cys-312, Cys-306-Cys-325, Cys-319-Cys-334, Cys-337-Cys-365, Cys-359-Cys-374, Cys-379-Cys-392, Cys-387-Cys-405, Cys-399-Cys-414, Cys-458-Cys-476, Cys-466-Cys-489, Cys-483-Cys-498, Cys-504-Cys-518, Cys-514-Cys-531, Cys-525-Cys-540, Cys-543-Cys-556, Cys-550-Cys-569, and Cys-563-Cys-578. An N-linked (GlcNAc...) asparagine glycan is attached at Asn-508. The N-linked (GlcNAc...) asparagine glycan is linked to Asn-614.

Its subcellular location is the cell membrane. In terms of biological role, probable receptor which is required for the oocyte-to-zygote transition although its exact function is controversial. Seems to be required for fertilization probably by promoting the interaction or fusion between sperm and oocyte. Conversely, shown to be dispensable for fertilization but required for the formation of a continuous and cohesive eggshell chitin layer by maintaining a homogenous distribution of chitin synthase chs-1 at the unfertilized oocyte cell membrane. Appears to recruit or maintain together to the unfertilized oocyte cortex several proteins including chs-1, kinase mbk-2 and pseudophosphatases egg-3, and possibly egg-4 and egg-5. The polypeptide is LDL receptor repeat-containing protein egg-1 (Caenorhabditis briggsae).